Reading from the N-terminus, the 272-residue chain is 2-dehydro-3-deoxyphosphooctonate aldolase (272 aa).

Belongs to the KdsA family.

The protein resides in the cytoplasm. It catalyses the reaction D-arabinose 5-phosphate + phosphoenolpyruvate + H2O = 3-deoxy-alpha-D-manno-2-octulosonate-8-phosphate + phosphate. The protein operates within carbohydrate biosynthesis; 3-deoxy-D-manno-octulosonate biosynthesis; 3-deoxy-D-manno-octulosonate from D-ribulose 5-phosphate: step 2/3. Its pathway is bacterial outer membrane biogenesis; lipopolysaccharide biosynthesis. In Geotalea daltonii (strain DSM 22248 / JCM 15807 / FRC-32) (Geobacter daltonii), this protein is 2-dehydro-3-deoxyphosphooctonate aldolase.